A 212-amino-acid chain; its full sequence is Protein-L-isoaspartate O-methyltransferase (212 aa).

The active site involves serine 61.

The protein belongs to the methyltransferase superfamily. L-isoaspartyl/D-aspartyl protein methyltransferase family.

It localises to the cytoplasm. The catalysed reaction is [protein]-L-isoaspartate + S-adenosyl-L-methionine = [protein]-L-isoaspartate alpha-methyl ester + S-adenosyl-L-homocysteine. Its function is as follows. Catalyzes the methyl esterification of L-isoaspartyl residues in peptides and proteins that result from spontaneous decomposition of normal L-aspartyl and L-asparaginyl residues. It plays a role in the repair and/or degradation of damaged proteins. The polypeptide is Protein-L-isoaspartate O-methyltransferase (Pseudoalteromonas atlantica (strain T6c / ATCC BAA-1087)).